A 355-amino-acid polypeptide reads, in one-letter code: Replication-associated protein (355 aa).

In terms of domain architecture, CRESS-DNA virus Rep endonuclease spans 11–114 (SHRNVNTFLT…PLAVFERGTF (104 aa)). The RCR-1 signature appears at 18-21 (FLTY). A divalent metal cation is bound by residues Glu52, His60, and His62. An RCR-2 motif is present at residues 60–62 (HLH). Tyr100 acts as the For DNA cleavage activity in catalysis. The short motif at 100-103 (YILK) is the RCR-3 element. An a divalent metal cation-binding site is contributed by Glu104. Residues 119 to 128 (SSFQGNPSKG) show a composition bias toward polar residues. The tract at residues 119–138 (SSFQGNPSKGNSEKKPSKDE) is disordered. The span at 129–138 (NSEKKPSKDE) shows a compositional bias: basic and acidic residues. The tract at residues 175–187 (SANKLFPEIQEEF) is oligomerization. 229–236 (GPTRTGKS) serves as a coordination point for ATP. The transactivation stretch occupies residues 252–270 (VDWSSYNEDAIYNIVDDIP). The Nuclear localization signal motif lies at 292-303 (KYGKKKKVQMKS).

The protein belongs to the geminiviridae Rep protein family. As to quaternary structure, homooligomer. Rep binds to repeated DNA motifs (iterons). Forms the O-complex, which is a Rep-DNA complex involved in the initiation of RCR. Part of the C- and V-complexes which are RepA-Rep-DNA complexes involved in the c-sense and v-sense transcription. Mg(2+) is required as a cofactor. It depends on Mn(2+) as a cofactor.

The protein localises to the host nucleus. Essential for the replication of viral ssDNA. The closed circular ssDNA genome is first converted to a superhelical dsDNA. Rep binds a specific region at the genome origin of replication. It introduces an endonucleolytic nick within the conserved sequence 5'-TAATATTAC-3' in the intergenic region of the genome present in all geminiviruses, thereby initiating the rolling circle replication (RCR). Following cleavage, binds covalently to the 5'-phosphate of DNA as a tyrosyl ester. The cleavage gives rise to a free 3'-OH that serves as a primer for the cellular DNA polymerase. The polymerase synthesizes the (+) strand DNA by rolling circle mechanism. After one round of replication, a Rep-catalyzed nucleotidyl transfer reaction releases a circular single-stranded virus genome, thereby terminating the replication. Displays origin-specific DNA cleavage, nucleotidyl transferase, ATPase and helicase activities. Acts as an inhibitor of C-sense gene transcription. The protein is Replication-associated protein of Maize streak virus genotype B (isolate Tas) (MSV).